Here is a 262-residue protein sequence, read N- to C-terminus: Phosphatidylserine decarboxylase proenzyme (262 aa).

Catalysis depends on charge relay system; for autoendoproteolytic cleavage activity residues Asp-86, His-142, and Ser-226. Ser-226 serves as the catalytic Schiff-base intermediate with substrate; via pyruvic acid; for decarboxylase activity. Ser-226 carries the post-translational modification Pyruvic acid (Ser); by autocatalysis.

This sequence belongs to the phosphatidylserine decarboxylase family. PSD-B subfamily. Prokaryotic type I sub-subfamily. Heterodimer of a large membrane-associated beta subunit and a small pyruvoyl-containing alpha subunit. Requires pyruvate as cofactor. In terms of processing, is synthesized initially as an inactive proenzyme. Formation of the active enzyme involves a self-maturation process in which the active site pyruvoyl group is generated from an internal serine residue via an autocatalytic post-translational modification. Two non-identical subunits are generated from the proenzyme in this reaction, and the pyruvate is formed at the N-terminus of the alpha chain, which is derived from the carboxyl end of the proenzyme. The autoendoproteolytic cleavage occurs by a canonical serine protease mechanism, in which the side chain hydroxyl group of the serine supplies its oxygen atom to form the C-terminus of the beta chain, while the remainder of the serine residue undergoes an oxidative deamination to produce ammonia and the pyruvoyl prosthetic group on the alpha chain. During this reaction, the Ser that is part of the protease active site of the proenzyme becomes the pyruvoyl prosthetic group, which constitutes an essential element of the active site of the mature decarboxylase.

The protein resides in the cell membrane. It catalyses the reaction a 1,2-diacyl-sn-glycero-3-phospho-L-serine + H(+) = a 1,2-diacyl-sn-glycero-3-phosphoethanolamine + CO2. Its pathway is phospholipid metabolism; phosphatidylethanolamine biosynthesis; phosphatidylethanolamine from CDP-diacylglycerol: step 2/2. Its function is as follows. Catalyzes the formation of phosphatidylethanolamine (PtdEtn) from phosphatidylserine (PtdSer). The sequence is that of Phosphatidylserine decarboxylase proenzyme from Bacillus cereus (strain AH820).